The sequence spans 21 residues: QHLADYDEVEDDRAKLHLDAR.

Glutamine 1 bears the Pyrrolidone carboxylic acid mark. Tyrosine 6 carries the post-translational modification Sulfotyrosine.

Heterohexamer; disulfide linked. Contains 2 sets of 3 non-identical chains (alpha, beta and gamma). The 2 heterotrimers are in head to head conformation with the N-termini in a small central domain. Conversion of fibrinogen to fibrin is triggered by thrombin, which cleaves fibrinopeptides A and B from alpha and beta chains, and thus exposes the N-terminal polymerization sites responsible for the formation of the soft clot.

It is found in the secreted. Cleaved by the protease thrombin to yield monomers which, together with fibrinogen alpha (FGA) and fibrinogen gamma (FGG), polymerize to form an insoluble fibrin matrix. Fibrin has a major function in hemostasis as one of the primary components of blood clots. In addition, functions during the early stages of wound repair to stabilize the lesion and guide cell migration during re-epithelialization. Was originally thought to be essential for platelet aggregation, based on in vitro studies using anticoagulated blood. However subsequent studies have shown that it is not absolutely required for thrombus formation in vivo. Enhances expression of SELP in activated platelets. Maternal fibrinogen is essential for successful pregnancy. Fibrin deposition is also associated with infection, where it protects against IFNG-mediated hemorrhage. May also facilitate the antibacterial immune response via both innate and T-cell mediated pathways. The sequence is that of Fibrinogen beta chain (FGB) from Rangifer tarandus (Reindeer).